A 365-amino-acid polypeptide reads, in one-letter code: Flagellar P-ring protein (365 aa).

A signal peptide spans 1 to 21 (MIKRIISIVFLLLTLPQLALA).

It belongs to the FlgI family. As to quaternary structure, the basal body constitutes a major portion of the flagellar organelle and consists of four rings (L,P,S, and M) mounted on a central rod.

Its subcellular location is the periplasm. The protein resides in the bacterial flagellum basal body. Its function is as follows. Assembles around the rod to form the L-ring and probably protects the motor/basal body from shearing forces during rotation. This chain is Flagellar P-ring protein, found in Geobacter metallireducens (strain ATCC 53774 / DSM 7210 / GS-15).